The following is a 190-amino-acid chain: ATP synthase subunit b, chloroplastic (190 aa).

A helical transmembrane segment spans residues 35 to 55 (LSVVLGVLIFFGKGVCASCLL).

This sequence belongs to the ATPase B chain family. F-type ATPases have 2 components, F(1) - the catalytic core - and F(0) - the membrane proton channel. F(1) has five subunits: alpha(3), beta(3), gamma(1), delta(1), epsilon(1). F(0) has four main subunits: a(1), b(1), b'(1) and c(10-14). The alpha and beta chains form an alternating ring which encloses part of the gamma chain. F(1) is attached to F(0) by a central stalk formed by the gamma and epsilon chains, while a peripheral stalk is formed by the delta, b and b' chains.

The protein localises to the plastid. Its subcellular location is the chloroplast thylakoid membrane. In terms of biological role, f(1)F(0) ATP synthase produces ATP from ADP in the presence of a proton or sodium gradient. F-type ATPases consist of two structural domains, F(1) containing the extramembraneous catalytic core and F(0) containing the membrane proton channel, linked together by a central stalk and a peripheral stalk. During catalysis, ATP synthesis in the catalytic domain of F(1) is coupled via a rotary mechanism of the central stalk subunits to proton translocation. Functionally, component of the F(0) channel, it forms part of the peripheral stalk, linking F(1) to F(0). The polypeptide is ATP synthase subunit b, chloroplastic (Coffea arabica (Arabian coffee)).